The chain runs to 265 residues: Hydroxyethylthiazole kinase (265 aa).

Met44 serves as a coordination point for substrate. ATP-binding residues include Lys120 and Thr166. Gly193 contacts substrate.

Belongs to the Thz kinase family. Mg(2+) serves as cofactor.

It carries out the reaction 5-(2-hydroxyethyl)-4-methylthiazole + ATP = 4-methyl-5-(2-phosphooxyethyl)-thiazole + ADP + H(+). The protein operates within cofactor biosynthesis; thiamine diphosphate biosynthesis; 4-methyl-5-(2-phosphoethyl)-thiazole from 5-(2-hydroxyethyl)-4-methylthiazole: step 1/1. Catalyzes the phosphorylation of the hydroxyl group of 4-methyl-5-beta-hydroxyethylthiazole (THZ). In Clostridium novyi (strain NT), this protein is Hydroxyethylthiazole kinase.